The following is a 378-amino-acid chain: Palmitoyltransferase PFA4 (378 aa).

Topologically, residues 1–9 are cytoplasmic; sequence MPVKLRWPW. A helical membrane pass occupies residues 10-30; sequence LGIAIPTFLISFIGYGAHYFI. Residues 31–40 lie on the Lumenal side of the membrane; sequence LSNFLSVPKQ. A helical membrane pass occupies residues 41 to 61; sequence ITFEFCLSMIWLSYYLAICTN. Topologically, residues 62–119 are cytoplasmic; sequence PGRPLPNYKPPPDIWRNFCKKCQSYKPERSHHCKTCNQCVLMMDHHCPWTMNCVGFAN. Residues 78–128 form the DHHC domain; sequence NFCKKCQSYKPERSHHCKTCNQCVLMMDHHCPWTMNCVGFANYPHFLRFLF. The active-site S-palmitoyl cysteine intermediate is the C108. Residues 120–140 form a helical membrane-spanning segment; the sequence is YPHFLRFLFWIIVTTSVLFCI. The Lumenal segment spans residues 141 to 164; it reads QAKRIYFIWQQRHLPGYFFKKSEL. A helical membrane pass occupies residues 165 to 185; it reads IFLTISSPLNSFVLLTITILF. Topologically, residues 186–378 are cytoplasmic; that stretch reads LRCLFNQILN…DDFGVDVDME (193 aa).

Belongs to the DHHC palmitoyltransferase family. PFA4 subfamily. Post-translationally, autopalmitoylated.

Its subcellular location is the endoplasmic reticulum membrane. The enzyme catalyses L-cysteinyl-[protein] + hexadecanoyl-CoA = S-hexadecanoyl-L-cysteinyl-[protein] + CoA. In terms of biological role, mediates the reversible addition of palmitate to target proteins, thereby regulating their membrane association and biological function. Palmitoylates several amino acid permeases. Palmitoylates chitin synthase CHS3, which is required for its proper export from the ER. Can palmitoylate RAS2 in vitro. This is Palmitoyltransferase PFA4 from Saccharomyces cerevisiae (strain ATCC 204508 / S288c) (Baker's yeast).